Here is a 175-residue protein sequence, read N- to C-terminus: Ribosome maturation factor RimM (175 aa).

The 79-residue stretch at 97 to 175 folds into the PRC barrel domain; sequence EGEFYWHQLE…RMVVDWDPEF (79 aa).

The protein belongs to the RimM family. As to quaternary structure, binds ribosomal protein uS19.

Its subcellular location is the cytoplasm. An accessory protein needed during the final step in the assembly of 30S ribosomal subunit, possibly for assembly of the head region. Essential for efficient processing of 16S rRNA. May be needed both before and after RbfA during the maturation of 16S rRNA. It has affinity for free ribosomal 30S subunits but not for 70S ribosomes. This chain is Ribosome maturation factor RimM, found in Marinobacter nauticus (strain ATCC 700491 / DSM 11845 / VT8) (Marinobacter aquaeolei).